A 96-amino-acid chain; its full sequence is Small ribosomal subunit protein bS6 (96 aa).

The protein belongs to the bacterial ribosomal protein bS6 family.

In terms of biological role, binds together with bS18 to 16S ribosomal RNA. This chain is Small ribosomal subunit protein bS6, found in Thermobifida fusca (strain YX).